The primary structure comprises 348 residues: Bifunctional nitrilase/nitrile hydratase NIT4B (348 aa).

Residues 29–300 (VRATVVQAST…EALISADLDL (272 aa)) form the CN hydrolase domain. The active-site Proton acceptor is the glutamate 69. The active-site Proton donor is the lysine 156. Residue cysteine 190 is the Nucleophile of the active site.

Belongs to the carbon-nitrogen hydrolase superfamily. Nitrilase family. As to expression, expressed in roots, stems, cotyledons, leaves and flowers.

The enzyme catalyses a nitrile + 2 H2O = a carboxylate + NH4(+). The catalysed reaction is 3-cyano-L-alanine + 2 H2O = L-aspartate + NH4(+). Highly specific for beta-cyano-L-alanine (Ala(CN)). Low activity with 3-phenylpropionitrile (PPN). Not associated with auxin production but may be involved in cyanide detoxification. This chain is Bifunctional nitrilase/nitrile hydratase NIT4B (NIT4B), found in Nicotiana tabacum (Common tobacco).